The primary structure comprises 336 residues: N-acetyl-gamma-glutamyl-phosphate reductase (336 aa).

The active site involves Cys-144.

Belongs to the NAGSA dehydrogenase family. Type 1 subfamily.

Its subcellular location is the cytoplasm. It carries out the reaction N-acetyl-L-glutamate 5-semialdehyde + phosphate + NADP(+) = N-acetyl-L-glutamyl 5-phosphate + NADPH + H(+). Its pathway is amino-acid biosynthesis; L-arginine biosynthesis; N(2)-acetyl-L-ornithine from L-glutamate: step 3/4. Catalyzes the NADPH-dependent reduction of N-acetyl-5-glutamyl phosphate to yield N-acetyl-L-glutamate 5-semialdehyde. In Methanosarcina acetivorans (strain ATCC 35395 / DSM 2834 / JCM 12185 / C2A), this protein is N-acetyl-gamma-glutamyl-phosphate reductase.